The primary structure comprises 104 residues: Small ribosomal subunit protein uS10 (104 aa).

Belongs to the universal ribosomal protein uS10 family. In terms of assembly, part of the 30S ribosomal subunit.

Its function is as follows. Involved in the binding of tRNA to the ribosomes. The polypeptide is Small ribosomal subunit protein uS10 (Aliarcobacter butzleri (strain RM4018) (Arcobacter butzleri)).